The sequence spans 288 residues: Syntaxin-1A (288 aa).

Residues 1-265 lie on the Cytoplasmic side of the membrane; that stretch reads MKDRTQELRT…KYQSKARRKK (265 aa). 3 positions are modified to phosphoserine: S14, S64, and S95. The stretch at 68 to 109 forms a coiled coil; it reads DEKTKEELEELMSDIKKTANKVRSKLKSIEQSIEQEEGLNRS. S188 carries the phosphoserine; by DAPK1 modification. In terms of domain architecture, t-SNARE coiled-coil homology spans 192 to 254; sequence LSEIETRHSE…ERAVSDTKKA (63 aa). Glycyl lysine isopeptide (Lys-Gly) (interchain with G-Cter in SUMO) cross-links involve residues K252, K253, and K256. The chain crosses the membrane as a helical; Anchor for type IV membrane protein span at residues 266–286; that stretch reads IMIIICCVIPGIVIASTVGGI. Over 287–288 the chain is Extracellular; the sequence is FA.

This sequence belongs to the syntaxin family. Part of the SNARE core complex containing SNAP25, VAMP2 and STX1A; this complex constitutes the basic catalytic machinery of the complex neurotransmitter release apparatus. The SNARE complex interacts with CPLX1. Interacts with STXBP1. The interaction with STXBP1 promotes assembly of the SNARE complex. Interacts (via C-terminus) with KCNB1 (via C-terminus); the interaction increases in a calcium-dependent manner and induces a pore-independent enhancement of exocytosis in neuroendocrine cells, chromaffin cells, pancreatic beta cells and from the soma of dorsal root ganglia (DRG) neurons. Interacts with SYTL4. Interacts with STXBP6. Interacts with PLCL1 (via C2 domain). Interacts with OTOF. Interacts with LGI3. Interacts (via the H3 domain) with SLC6A4 (via the N-terminus); this interaction regulates SLC4A6 channel conductance in thalamocortical neurons. Interacts with SYT6 and SYT8; the interaction is Ca(2+)-dependent. Interacts with VAMP8. Interacts with SNAP23. Interacts with VAPA and SYBU. Interacts with PRRT2. Interacts with SEPT8. Interacts with STXBP5L. Interacts with synaptotagmin-1/SYT1. Interacts with SEPTIN5; in the cerebellar cortex. Interacts with SEPTIN4; in the striatum. Post-translationally, phosphorylated by CK2. Phosphorylation at Ser-188 by DAPK1 significantly decreases its interaction with STXBP1. In terms of processing, sumoylated, sumoylation is required for regulation of synaptic vesicle endocytosis.

The protein resides in the cytoplasmic vesicle. It localises to the secretory vesicle. The protein localises to the synaptic vesicle membrane. It is found in the cell membrane. Its subcellular location is the synapse. The protein resides in the synaptosome. Plays an essential role in hormone and neurotransmitter calcium-dependent exocytosis and endocytosis. Part of the SNARE (Soluble NSF Attachment Receptor) complex composed of SNAP25, STX1A and VAMP2 which mediates the fusion of synaptic vesicles with the presynaptic plasma membrane. STX1A and SNAP25 are localized on the plasma membrane while VAMP2 resides in synaptic vesicles. The pairing of the three SNAREs from the N-terminal SNARE motifs to the C-terminal anchors leads to the formation of the SNARE complex, which brings membranes into close proximity and results in final fusion. Participates in the calcium-dependent regulation of acrosomal exocytosis in sperm. Also plays an important role in the exocytosis of hormones such as insulin or glucagon-like peptide 1 (GLP-1). This is Syntaxin-1A (STX1A) from Pongo abelii (Sumatran orangutan).